A 214-amino-acid polypeptide reads, in one-letter code: Large ribosomal subunit protein uL3 (214 aa).

Position 153 is an N5-methylglutamine (Q153).

The protein belongs to the universal ribosomal protein uL3 family. Part of the 50S ribosomal subunit. Forms a cluster with proteins L14 and L19. Methylated by PrmB.

In terms of biological role, one of the primary rRNA binding proteins, it binds directly near the 3'-end of the 23S rRNA, where it nucleates assembly of the 50S subunit. The chain is Large ribosomal subunit protein uL3 from Methylobacillus flagellatus (strain ATCC 51484 / DSM 6875 / VKM B-1610 / KT).